Here is a 441-residue protein sequence, read N- to C-terminus: Ribulose bisphosphate carboxylase large chain (441 aa).

An N6,N6,N6-trimethyllysine modification is found at lysine 4. Positions 113 and 163 each coordinate substrate. Residue lysine 165 is the Proton acceptor of the active site. Lysine 167 provides a ligand contact to substrate. Lysine 191, aspartate 193, and glutamate 194 together coordinate Mg(2+). The residue at position 191 (lysine 191) is an N6-carboxylysine. Residue histidine 284 is the Proton acceptor of the active site. Positions 285, 317, and 369 each coordinate substrate.

Belongs to the RuBisCO large chain family. Type I subfamily. Heterohexadecamer of 8 large chains and 8 small chains; disulfide-linked. The disulfide link is formed within the large subunit homodimers. Mg(2+) serves as cofactor. Post-translationally, the disulfide bond which can form in the large chain dimeric partners within the hexadecamer appears to be associated with oxidative stress and protein turnover.

Its subcellular location is the plastid. The protein resides in the chloroplast. The catalysed reaction is 2 (2R)-3-phosphoglycerate + 2 H(+) = D-ribulose 1,5-bisphosphate + CO2 + H2O. It catalyses the reaction D-ribulose 1,5-bisphosphate + O2 = 2-phosphoglycolate + (2R)-3-phosphoglycerate + 2 H(+). In terms of biological role, ruBisCO catalyzes two reactions: the carboxylation of D-ribulose 1,5-bisphosphate, the primary event in carbon dioxide fixation, as well as the oxidative fragmentation of the pentose substrate in the photorespiration process. Both reactions occur simultaneously and in competition at the same active site. The polypeptide is Ribulose bisphosphate carboxylase large chain (Heliamphora nutans (Venezuelan marsh pitcher plant)).